A 707-amino-acid polypeptide reads, in one-letter code: E3 ubiquitin-protein ligase MARCHF7 (707 aa).

N-acetylmethionine is present on M1. 5 disordered regions span residues M1–R126, L157–T279, F294–E343, S361–R425, and A444–T473. The span at S17–L33 shows a compositional bias: low complexity. Over residues Y37–S48 the composition is skewed to basic and acidic residues. A compositionally biased stretch (low complexity) spans S52–A65. Composition is skewed to polar residues over residues W66–Q83, S95–R126, N189–I212, and I254–S270. Over residues F294–S303 the composition is skewed to low complexity. 3 stretches are compositionally biased toward polar residues: residues L304 to V336, F373 to N392, and I412 to S421. Phosphoserine occurs at positions 317 and 389. Positions A444–G470 are enriched in low complexity. Residues S544–N614 form an RING-CH-type zinc finger. Residues C552, C555, C570, C572, H580, C583, C604, and C607 each contribute to the Zn(2+) site. Residue T686 is modified to Phosphothreonine. Phosphoserine is present on residues S687 and S691.

It localises to the cytoplasm. The enzyme catalyses S-ubiquitinyl-[E2 ubiquitin-conjugating enzyme]-L-cysteine + [acceptor protein]-L-lysine = [E2 ubiquitin-conjugating enzyme]-L-cysteine + N(6)-ubiquitinyl-[acceptor protein]-L-lysine.. Its pathway is protein modification; protein ubiquitination. Its function is as follows. E3 ubiquitin-protein ligase which may specifically enhance the E2 activity of HIP2. E3 ubiquitin ligases accept ubiquitin from an E2 ubiquitin-conjugating enzyme in the form of a thioester and then directly transfer the ubiquitin to targeted substrates. May be involved in T-cell proliferation by regulating LIF secretion. May play a role in lysosome homeostasis. Promotes 'Lys-6', 'Lys-11' and 'Lys-63'-linked mixed polyubiquitination on ATG14 leading to the inhibition of autophagy by impairing the interaction between ATG14 and STX7. Participates in the dopamine-mediated negative regulation of the NLRP3 inflammasome by promoting its uibiquitination and subsequent degradation. This chain is E3 ubiquitin-protein ligase MARCHF7 (MARCHF7), found in Pongo abelii (Sumatran orangutan).